Reading from the N-terminus, the 297-residue chain is Acetyl-coenzyme A carboxylase carboxyl transferase subunit beta (297 aa).

A disordered region spans residues 1–23 (MSWIERILGRTSSSSSSSKSKVP). In terms of domain architecture, CoA carboxyltransferase N-terminal spans 26–295 (VWTKCTSCEQ…PFKTAELIVE (270 aa)). Zn(2+)-binding residues include cysteine 30, cysteine 33, cysteine 49, and cysteine 52. Residues 30–52 (CTSCEQVLYSEELKRNMHVCPKC) form a C4-type zinc finger.

Belongs to the AccD/PCCB family. In terms of assembly, acetyl-CoA carboxylase is a heterohexamer composed of biotin carboxyl carrier protein (AccB), biotin carboxylase (AccC) and two subunits each of ACCase subunit alpha (AccA) and ACCase subunit beta (AccD). Zn(2+) serves as cofactor.

The protein localises to the cytoplasm. It catalyses the reaction N(6)-carboxybiotinyl-L-lysyl-[protein] + acetyl-CoA = N(6)-biotinyl-L-lysyl-[protein] + malonyl-CoA. The protein operates within lipid metabolism; malonyl-CoA biosynthesis; malonyl-CoA from acetyl-CoA: step 1/1. Component of the acetyl coenzyme A carboxylase (ACC) complex. Biotin carboxylase (BC) catalyzes the carboxylation of biotin on its carrier protein (BCCP) and then the CO(2) group is transferred by the transcarboxylase to acetyl-CoA to form malonyl-CoA. The polypeptide is Acetyl-coenzyme A carboxylase carboxyl transferase subunit beta (Actinobacillus pleuropneumoniae serotype 3 (strain JL03)).